The following is a 460-amino-acid chain: Inactive 7-epi-sesquithujene synthase (460 aa).

Residues D308 and D312 each contribute to the Mg(2+) site. Substrate is bound by residues D308 and D312. Residues 308-312 carry the DDXXD motif motif; the sequence is DDMFD.

It belongs to the terpene synthase family. Monomer. Requires Mg(2+) as cofactor. Mn(2+) serves as cofactor.

It is found in the cytoplasm. It functions in the pathway secondary metabolite biosynthesis; terpenoid biosynthesis. Non-functional sesquiterpene synthase due to a frameshift removing part of the catalytic site. This chain is Inactive 7-epi-sesquithujene synthase, found in Zea mays (Maize).